The chain runs to 253 residues: tRNA (guanine-N(7)-)-methyltransferase (253 aa).

The segment covering 1-12 (MSQTPMPQPDQA) has biased composition (pro residues). The segment at 1-39 (MSQTPMPQPDQAPPVDVGQPVDEAEAKRRRFKTHGRKKG) is disordered. A compositionally biased stretch (basic residues) spans 27–39 (KRRRFKTHGRKKG). 4 residues coordinate S-adenosyl-L-methionine: Glu-84, Asp-109, Asn-136, and Asp-159. The active site involves Asp-159. Substrate contacts are provided by residues Lys-163, Asp-195, and 232–235 (TNFE).

This sequence belongs to the class I-like SAM-binding methyltransferase superfamily. TrmB family.

It carries out the reaction guanosine(46) in tRNA + S-adenosyl-L-methionine = N(7)-methylguanosine(46) in tRNA + S-adenosyl-L-homocysteine. Its pathway is tRNA modification; N(7)-methylguanine-tRNA biosynthesis. Functionally, catalyzes the formation of N(7)-methylguanine at position 46 (m7G46) in tRNA. The chain is tRNA (guanine-N(7)-)-methyltransferase from Magnetococcus marinus (strain ATCC BAA-1437 / JCM 17883 / MC-1).